The sequence spans 158 residues: MQPSSGRRFTFQTSVYEEACGRLVLTSFIAERRRPGTIIKTSLEREFYRMGSLPEFPLENPFENRNRFYVVDDESELRANDWIRLYLELSVAISDRTTTDHDLSGLRIVSVAIQTMEPPSESSLTAKNATVYIRYIDFCKARCGQNLDRIAVVRRNLQ.

Belongs to the UPF0725 (EMB2204) family.

The chain is UPF0725 protein At3g57210 from Arabidopsis thaliana (Mouse-ear cress).